Reading from the N-terminus, the 232-residue chain is Ubiquinone biosynthesis O-methyltransferase (232 aa).

S-adenosyl-L-methionine is bound by residues arginine 36, glycine 55, aspartate 76, and leucine 120.

It belongs to the methyltransferase superfamily. UbiG/COQ3 family.

It catalyses the reaction a 3-demethylubiquinol + S-adenosyl-L-methionine = a ubiquinol + S-adenosyl-L-homocysteine + H(+). It carries out the reaction a 3-(all-trans-polyprenyl)benzene-1,2-diol + S-adenosyl-L-methionine = a 2-methoxy-6-(all-trans-polyprenyl)phenol + S-adenosyl-L-homocysteine + H(+). It functions in the pathway cofactor biosynthesis; ubiquinone biosynthesis. O-methyltransferase that catalyzes the 2 O-methylation steps in the ubiquinone biosynthetic pathway. This Pseudomonas putida (strain ATCC 700007 / DSM 6899 / JCM 31910 / BCRC 17059 / LMG 24140 / F1) protein is Ubiquinone biosynthesis O-methyltransferase.